The primary structure comprises 67 residues: Type 3 secretion system chaperone PscE (67 aa).

A coiled-coil region spans residues 16-37; that stretch reads HAAALRQRLQAALAECRRELAR.

The protein belongs to the YscE family. In terms of assembly, forms a stable ternary complex with PscF/SctF and PscG within the cytoplasm. Co-stabilized by PscG.

The protein localises to the cytoplasm. Chaperone of the type III secretion system (T3SS), also called injectisome, which is used to inject bacterial effector proteins into eukaryotic host cells, facilitating the establishment and dissemination of infection. Along with PscG, prevents premature polymerization of the PscF/SctF needle protein within the cytoplasm. Required for type III secretion needle assembly. Also required for cytotoxicity by influencing PscF/SctF levels. The chain is Type 3 secretion system chaperone PscE (pscE) from Pseudomonas aeruginosa (strain ATCC 15692 / DSM 22644 / CIP 104116 / JCM 14847 / LMG 12228 / 1C / PRS 101 / PAO1).